Consider the following 648-residue polypeptide: Transcription initiation factor TFIID subunit 5 (648 aa).

Low complexity predominate over residues 1–13 (MDSENSSSHSISS). The segment at 1 to 21 (MDSENSSSHSISSPQMFQNTH) is disordered. The 33-residue stretch at 35–67 (MNNESLQMIIGYLRRNGLTETEELLTREAGPVL) folds into the LisH domain. WD repeat units lie at residues 317-358 (NAPI…KKLR), 392-431 (GHGGPVFSVNFSPDRRLLISSAGDRTVRLWSMETQRNAVI), 433-472 (RTPAVVWQAQFCSRGYYFATASADKTAAMWSTDRMHPLRI), 475-514 (DPYGDVGCIDYHPNCNYIAGGSDDRYVRVWDVCSGTRVRI), 517-556 (GHKASIIAVKFSPCGRYIVSLDAIGNLMIWDLAYQRLVAA), and 560-599 (EQAGTKGSITFSRDGGVFAVSHGNSSIQLYSLDTLIGTVL).

The protein belongs to the WD repeat TAF5 family. As to quaternary structure, component of the TFIID basal transcription factor complex, composed of TATA-box-binding protein tbp-1, and a number of TBP-associated factors (TAFs).

The protein localises to the nucleus. Its function is as follows. The TFIID basal transcription factor complex plays a major role in the initiation of RNA polymerase II (Pol II)-dependent transcription. TFIID recognizes and binds promoters via its subunit tbp-1, a TATA-box-binding protein, and promotes assembly of the pre-initiation complex (PIC). The TFIID complex consists of tbp-1 and TBP-associated factors (TAFs), including taf-5. Essential for early embryonic development, but not required for transcription of some genes; probably acts via activating transcription initiation by RNA Pol II, as part of the TFIID complex. The protein is Transcription initiation factor TFIID subunit 5 of Caenorhabditis elegans.